The chain runs to 174 residues: MSDGSMDDDGRLFPDLGSSTHDNREIRVRFLNRCAYPVDVFWLNPSKQPTKYGTLAQKKYLDIKTFKDHPWVARRSFDGCKVLVNEKEVFWPEPAPRMNLIVRNHCVITMKVQSLREIAGRSFLRHNPTEVPNKIKGLPRELQFEVKHFLDRKQEYSEIVCRSIPPPGPQRPQQ.

Belongs to the VHL family. Interacts with hif-1 (hydroxylated on 'Pro-621'); the interaction induces hif-1 degradation. May be a component of the cullin E3 ubiquitin ligase complex.

Its pathway is protein modification; protein ubiquitination. In terms of biological role, involved in the response to variation in environmental oxygen levels by targeting the hypoxia-inducible transcription factor hif-1 for proteasomal degradation when oxygen levels are normal (around 20%). By regulating hif-1 expression, plays a role in iron homeostasis, aging, heat acclimation and progeny size. Mediates resistance to enteropathogenic E.coli. Mediates susceptibility to B.thuringiensis pore-forming toxins. Not involved in P.aeruginosa susceptibility. The chain is von Hippel-Lindau tumor suppressor homolog from Caenorhabditis elegans.